The primary structure comprises 1259 residues: Protein retinal degeneration B (1259 aa).

A disordered region spans residues 268–378 (GGGEECSDDS…SKGALHSPVG (111 aa)). A phosphoserine mark is found at S274 and S277. The segment covering 284-293 (STAATAASTT) has biased composition (low complexity). The segment covering 318-335 (SSDEEGEEEEDDDEDEND) has biased composition (acidic residues). Residues 347–363 (QGGSAQRSRSQSIQMAQ) show a composition bias toward low complexity. Phosphoserine is present on residues S401, S403, and S434. Disordered regions lie at residues 427 to 454 (LLGEGDDSPPPHGGPSSAASVGGRGNSR), 472 to 500 (RGNKRQLRSSASVDRSHDSSPPGSPSTPS), and 660 to 692 (SQPGTASGASNSGGDAATNINTHNPLSPRNSRL). The segment covering 663–678 (GTASGASNSGGDAATN) has biased composition (low complexity). Polar residues predominate over residues 679-689 (INTHNPLSPRN). A DDHD domain is found at 730–913 (LDFEVCDFFM…IAFILRQIGK (184 aa)).

Belongs to the PtdIns transfer protein family. PI transfer class IIA subfamily. Expressed in adult heads, not detected in bodies.

The catalysed reaction is a 1,2-diacyl-sn-glycero-3-phospho-(1D-myo-inositol)(in) = a 1,2-diacyl-sn-glycero-3-phospho-(1D-myo-inositol)(out). It catalyses the reaction a 1,2-diacyl-sn-glycero-3-phosphate(in) = a 1,2-diacyl-sn-glycero-3-phosphate(out). Its function is as follows. Catalyzes the transfer of phosphatidylinositol (PI) and phosphatidic acid (PA) between membranes. May control phosphatidylinositol concentration in transport vesicles from the subrhabdomeric cisternae (SRC) to the rhabdomere. May function as a calcium transporter. The protein is Protein retinal degeneration B (rdgB) of Drosophila melanogaster (Fruit fly).